Reading from the N-terminus, the 123-residue chain is Ribosome-binding factor A (123 aa).

The protein belongs to the RbfA family. As to quaternary structure, monomer. Binds 30S ribosomal subunits, but not 50S ribosomal subunits or 70S ribosomes.

It localises to the cytoplasm. Functionally, one of several proteins that assist in the late maturation steps of the functional core of the 30S ribosomal subunit. Associates with free 30S ribosomal subunits (but not with 30S subunits that are part of 70S ribosomes or polysomes). Required for efficient processing of 16S rRNA. May interact with the 5'-terminal helix region of 16S rRNA. The polypeptide is Ribosome-binding factor A (Neisseria meningitidis serogroup B (strain ATCC BAA-335 / MC58)).